The sequence spans 357 residues: MSLTRLLIRDFRNIETADLALSPGFNFLVGANGSGKTSVLEAIYTLGHGRAFRSLQIGCVIRHEQEAFVLHGRLQGEERETAIGLTKDKQGDSKVRIDGTDGHKVAELAHLMPMQLITPEGFTLLNGGPKYRRAFLDWGCFHNEPGFFTAWSNLKRLLKQRNAALRQVTRYEQLRPWDKELIPLAEQISTWRAEYSAGIAADMDDTCKQFLPEFSLTFSFQRGWEKETEYAEVLERNFERDRQLTYTAHGPHKADLRIRADGAPVEDTLSRGQLKLLMCALRLAQGEFLTRESGRRCLYLIDDFASELDDERRGLLASRLKATQSQVFVSAISAEHVIDMSDENSKMFTVEKGKITD.

30 to 37 (GANGSGKT) contacts ATP.

It belongs to the RecF family.

It is found in the cytoplasm. Its function is as follows. The RecF protein is involved in DNA metabolism; it is required for DNA replication and normal SOS inducibility. RecF binds preferentially to single-stranded, linear DNA. It also seems to bind ATP. The polypeptide is DNA replication and repair protein RecF (Shigella flexneri serotype 5b (strain 8401)).